A 796-amino-acid chain; its full sequence is DnaJ homolog subfamily C member 10 (796 aa).

The N-terminal stretch at 1–33 is a signal peptide; that stretch reads MKHSLNTATSSSSVLKRTILYLVLISLAALVYC. One can recognise a J domain in the interval 36–100; the sequence is DYYDLLGVSK…DLRKKYDKYG (65 aa). Residues 131–233 form the Thioredoxin 1 domain; the sequence is EIITLDRGEF…ERLVNFAMPY (103 aa). A disulfide bond links C159 and C162. Trxb stretches follow at residues 236–351 and 349–464; these read STVT…LPDL and PDLE…PTNF. Thioredoxin domains lie at 455–554, 558–668, and 672–780; these read HVIT…IEDL, SVVT…ALMY, and ASFD…ITKR. C481 and C484 form a disulfide bridge. N-linked (GlcNAc...) asparagine glycosylation occurs at N531. 2 disulfide bridges follow: C589–C592 and C701–C704. N753 carries N-linked (GlcNAc...) asparagine glycosylation. The Prevents secretion from ER motif lies at 793–796; it reads KDEL.

It localises to the endoplasmic reticulum lumen. Its function is as follows. Endoplasmic reticulum disulfide reductase involved both in the correct folding of proteins and degradation of misfolded proteins. Required for efficient folding of proteins in the endoplasmic reticulum by catalyzing the removal of non-native disulfide bonds formed during the folding of proteins. Also involved in endoplasmic reticulum-associated degradation (ERAD) by reducing incorrect disulfide bonds in misfolded glycoproteins. This Xenopus laevis (African clawed frog) protein is DnaJ homolog subfamily C member 10 (dnajc10).